The following is a 320-amino-acid chain: Zinc transporter ZitB (320 aa).

The next 6 helical transmembrane spans lie at 16–36 (LLAA…GGLL), 43–63 (LADA…LVAV), 85–105 (AAFV…WEAI), 117–137 (VPML…FWLL), 153–173 (LHVL…IIIL), and 180–200 (IDPI…WALL).

It belongs to the cation diffusion facilitator (CDF) transporter (TC 2.A.4) family. SLC30A subfamily.

It is found in the cell inner membrane. Involved in zinc efflux across the cytoplasmic membrane, thus reducing zinc accumulation in the cytoplasm and rendering bacteria more resistant to zinc. It may contribute to zinc homeostasis at low concentrations of zinc. The sequence is that of Zinc transporter ZitB from Pectobacterium atrosepticum (strain SCRI 1043 / ATCC BAA-672) (Erwinia carotovora subsp. atroseptica).